Here is a 151-residue protein sequence, read N- to C-terminus: Protein NrdI (151 aa).

It belongs to the NrdI family.

Its function is as follows. Probably involved in ribonucleotide reductase function. This chain is Protein NrdI, found in Mesoplasma florum (strain ATCC 33453 / NBRC 100688 / NCTC 11704 / L1) (Acholeplasma florum).